A 237-amino-acid chain; its full sequence is Uridylate kinase (237 aa).

ATP is bound at residue 13–16; sequence KLSG. Residue Gly53 coordinates UMP. The ATP site is built by Gly54 and Arg58. UMP is bound by residues Asp73 and 134–141; that span reads AGLPYFST. The ATP site is built by Asn162, Tyr168, and Asp171.

It belongs to the UMP kinase family. Homohexamer.

Its subcellular location is the cytoplasm. The enzyme catalyses UMP + ATP = UDP + ADP. It participates in pyrimidine metabolism; CTP biosynthesis via de novo pathway; UDP from UMP (UMPK route): step 1/1. Its activity is regulated as follows. Inhibited by UTP. Functionally, catalyzes the reversible phosphorylation of UMP to UDP. This is Uridylate kinase from Leifsonia xyli subsp. xyli (strain CTCB07).